The sequence spans 285 residues: Pantothenate synthetase (285 aa).

Residue 32-39 (MGALHDGH) coordinates ATP. The active-site Proton donor is the His-39. Gln-63 provides a ligand contact to (R)-pantoate. Beta-alanine is bound at residue Gln-63. 149 to 152 (GEKD) serves as a coordination point for ATP. Gln-155 provides a ligand contact to (R)-pantoate. Residues Val-178 and 186–189 (MSSR) contribute to the ATP site.

Belongs to the pantothenate synthetase family. In terms of assembly, homodimer.

The protein resides in the cytoplasm. The catalysed reaction is (R)-pantoate + beta-alanine + ATP = (R)-pantothenate + AMP + diphosphate + H(+). It functions in the pathway cofactor biosynthesis; (R)-pantothenate biosynthesis; (R)-pantothenate from (R)-pantoate and beta-alanine: step 1/1. Its function is as follows. Catalyzes the condensation of pantoate with beta-alanine in an ATP-dependent reaction via a pantoyl-adenylate intermediate. This is Pantothenate synthetase from Ruegeria pomeroyi (strain ATCC 700808 / DSM 15171 / DSS-3) (Silicibacter pomeroyi).